A 265-amino-acid polypeptide reads, in one-letter code: Glutamate racemase (265 aa).

Substrate is bound by residues 10–11 (DS) and 42–43 (YG). Residue cysteine 73 is the Proton donor/acceptor of the active site. Substrate is bound at residue 74 to 75 (NT). Cysteine 183 serves as the catalytic Proton donor/acceptor. 184 to 185 (TH) provides a ligand contact to substrate.

Belongs to the aspartate/glutamate racemases family.

It carries out the reaction L-glutamate = D-glutamate. It functions in the pathway cell wall biogenesis; peptidoglycan biosynthesis. Its function is as follows. Provides the (R)-glutamate required for cell wall biosynthesis. In Corynebacterium diphtheriae (strain ATCC 700971 / NCTC 13129 / Biotype gravis), this protein is Glutamate racemase.